A 177-amino-acid chain; its full sequence is uncharacterized protein (177 aa).

A signal peptide spans 1-22; the sequence is MCGVVVVIVALVPADPLLPAFA. 3 helical membrane passes run 31 to 51, 94 to 114, and 136 to 156; these read VFIP…TCVF, ISLM…LKFV, and LFPI…LLEI.

It localises to the membrane. This is an uncharacterized protein from Saccharomyces cerevisiae (strain ATCC 204508 / S288c) (Baker's yeast).